The chain runs to 485 residues: tRNA sulfurtransferase (485 aa).

A THUMP domain is found at Glu63 to Arg167. Residues Leu185–Ile186, Lys267, Gly289, and Gln298 contribute to the ATP site. Cysteines 346 and 458 form a disulfide. Residues Val406 to Pro484 form the Rhodanese domain. The active-site Cysteine persulfide intermediate is the Cys458.

This sequence belongs to the ThiI family.

Its subcellular location is the cytoplasm. The catalysed reaction is [ThiI sulfur-carrier protein]-S-sulfanyl-L-cysteine + a uridine in tRNA + 2 reduced [2Fe-2S]-[ferredoxin] + ATP + H(+) = [ThiI sulfur-carrier protein]-L-cysteine + a 4-thiouridine in tRNA + 2 oxidized [2Fe-2S]-[ferredoxin] + AMP + diphosphate. The enzyme catalyses [ThiS sulfur-carrier protein]-C-terminal Gly-Gly-AMP + S-sulfanyl-L-cysteinyl-[cysteine desulfurase] + AH2 = [ThiS sulfur-carrier protein]-C-terminal-Gly-aminoethanethioate + L-cysteinyl-[cysteine desulfurase] + A + AMP + 2 H(+). Its pathway is cofactor biosynthesis; thiamine diphosphate biosynthesis. Catalyzes the ATP-dependent transfer of a sulfur to tRNA to produce 4-thiouridine in position 8 of tRNAs, which functions as a near-UV photosensor. Also catalyzes the transfer of sulfur to the sulfur carrier protein ThiS, forming ThiS-thiocarboxylate. This is a step in the synthesis of thiazole, in the thiamine biosynthesis pathway. The sulfur is donated as persulfide by IscS. The polypeptide is tRNA sulfurtransferase (Shewanella loihica (strain ATCC BAA-1088 / PV-4)).